The following is a 353-amino-acid chain: Polyadenylate-binding protein-interacting protein 10 (353 aa).

The disordered stretch occupies residues 1–61; sequence MAVAENAGVK…IDSTPETDDR (61 aa). Over residues 20–31 the composition is skewed to low complexity; the sequence is NNNTAASATETT. A PAM2-like motif is present at residues 96–106; it reads KLNPMAQEFVP. Residues 128–159 form a disordered region; it reads AAPPKLADGNDHFPRRRRSFGQGKRRMNKRTS. Residues 141–156 show a composition bias toward basic residues; sequence PRRRRSFGQGKRRMNK. Positions 142 to 153 match the Bipartite nuclear localization signal motif; it reads RRRRSFGQGKRR. 2 RRM domains span residues 169–244 and 266–341; these read RTVY…PSKT.

Expressed in cauline leaves, stems, rosette leaves, immature siliques and primary inflorescences.

It localises to the nucleus. The protein is Polyadenylate-binding protein-interacting protein 10 (CID10) of Arabidopsis thaliana (Mouse-ear cress).